The primary structure comprises 395 residues: MRACQQGRSSSLVSPYMAPKNQSERFAFIAEWYDPNASLLRRYELLFYPTDGSVEMHDVKNRRTFLKRTKYEDLRLEDLFIGNKVNVFSRQLVLIDYGDQYTARQLGSRKEKTLALIKPDAVSKAGEIIEMINKSGFTITKLRMMTLTRKEAADFHVDHHSRPFYNELIQFITSGPVIAMEILRDDAICEWKRLLGPANSGLSRTDAPGSIRALFGTDGVRNAAHGPDTFASAAREMELFFPSSGGCGPANTAKFTNCTCCIIKPHAISEGMLGKILIAIRDACFGMSAIQMFNLDRANVEEFYEVYKGVVSEYNDMVTELCSGPCVAIEIQQSNPTKTFREFCGPADPEIARHLRPETLRAIFGKTKVQNAVHCTDLPEDGLLEVQYFFKILDN.

Residues 22–110 (QSERFAFIAE…YTARQLGSRK (89 aa)) form the DM10 domain.

Belongs to the NDK family. In terms of assembly, component of sperm flagellar doublet microtubules. Component of the gamma-tubulin ring complex.

It is found in the cytoplasm. It localises to the cytoskeleton. Its subcellular location is the microtubule organizing center. The protein localises to the centrosome. The protein resides in the nucleus. It is found in the spindle. It localises to the cilium axoneme. Its subcellular location is the flagellum axoneme. The protein localises to the cell projection. The protein resides in the cilium. In terms of biological role, possesses an intrinsic kinase activity. Displays 3'-5' exonuclease activity with a preference for single-stranded DNA. Does not seem to have nucleoside diphosphate kinase activity. Functional component of the gamma-tubulin ring complex, implicated in the regulation of the microtubule-nucleating activity of the gamma-tubulin ring complex in centrosomes, in a kinase activity-dependent manner. Part of the dynein-decorated doublet microtubules (DMTs) in cilia axoneme, which is required for motile cilia beating. The polypeptide is Nucleoside diphosphate kinase homolog 7 (Mus musculus (Mouse)).